Consider the following 465-residue polypeptide: Asparagine--tRNA ligase (465 aa).

The protein belongs to the class-II aminoacyl-tRNA synthetase family. In terms of assembly, homodimer.

Its subcellular location is the cytoplasm. It carries out the reaction tRNA(Asn) + L-asparagine + ATP = L-asparaginyl-tRNA(Asn) + AMP + diphosphate + H(+). The polypeptide is Asparagine--tRNA ligase (Clostridium perfringens (strain ATCC 13124 / DSM 756 / JCM 1290 / NCIMB 6125 / NCTC 8237 / Type A)).